The sequence spans 148 residues: 3-hydroxyacyl-[acyl-carrier-protein] dehydratase FabZ (148 aa).

Histidine 55 is a catalytic residue.

Belongs to the thioester dehydratase family. FabZ subfamily.

Its subcellular location is the cytoplasm. The catalysed reaction is a (3R)-hydroxyacyl-[ACP] = a (2E)-enoyl-[ACP] + H2O. In terms of biological role, involved in unsaturated fatty acids biosynthesis. Catalyzes the dehydration of short chain beta-hydroxyacyl-ACPs and long chain saturated and unsaturated beta-hydroxyacyl-ACPs. The protein is 3-hydroxyacyl-[acyl-carrier-protein] dehydratase FabZ of Haemophilus influenzae (strain ATCC 51907 / DSM 11121 / KW20 / Rd).